The following is a 474-amino-acid chain: PRAME family member 13 (474 aa).

One copy of the LRR 1; degenerate repeat lies at 97-124; the sequence is RRKLQVLDLRDVDENFWARWPGAWALSC. An LRR 2; degenerate repeat occupies 179-203; that stretch reads HLCCSKLVNYLTPIKHLRKSLKIIY. The stretch at 204-230 is one LRR 3; degenerate repeat; the sequence is LNSIQELEIHNMSWPRLIRKLRCYLKE. An LRR 4; degenerate repeat occupies 231–265; it reads MKTLGKLVFSRCHHSTSDNELEGRLVTKFSSVFLG. LRR repeat units lie at residues 266–291, 292–323, 324–342, 348–375, and 376–400; these read LEHL…IRCL, QNPL…GYLK, HLNL…PLGA, AASL…GLSR, and CSQL…LLRH.

The protein belongs to the PRAME family.

In Homo sapiens (Human), this protein is PRAME family member 13.